The primary structure comprises 475 residues: UDP-N-acetylmuramate--L-alanine ligase (475 aa).

125–131 (GTHGKTT) is a binding site for ATP.

The protein belongs to the MurCDEF family.

It localises to the cytoplasm. The enzyme catalyses UDP-N-acetyl-alpha-D-muramate + L-alanine + ATP = UDP-N-acetyl-alpha-D-muramoyl-L-alanine + ADP + phosphate + H(+). It participates in cell wall biogenesis; peptidoglycan biosynthesis. Its function is as follows. Cell wall formation. This is UDP-N-acetylmuramate--L-alanine ligase from Haemophilus influenzae (strain PittGG).